A 61-amino-acid chain; its full sequence is U-scoloptoxin(14)-Sm1a (61 aa).

The signal sequence occupies residues 1-24 (MNPKLCMLLLVCLMAFYVIETVQA).

This sequence belongs to the scoloptoxin-14 family. Post-translationally, contains 4 disulfide bonds. As to expression, expressed by the venom gland.

The protein resides in the secreted. This chain is U-scoloptoxin(14)-Sm1a, found in Scolopendra morsitans (Tanzanian blue ringleg centipede).